Consider the following 491-residue polypeptide: Synaptotagmin-9 (491 aa).

Topologically, residues 1–52 (MPGARDALCHQALQLLAELCARGALEHDSCQDFIYHLRDRARPRLRDPDISV) are vesicular. Residues 9–31 (CHQALQLLAELCARGALEHDSCQ) are cysteine motif. Residues 53-73 (SLLTLVVTACGLALFGVSLFV) form a helical membrane-spanning segment. Residues 74 to 491 (SWKLCWVPWR…AHWHSLMEKR (418 aa)) are Cytoplasmic-facing. Polar residues predominate over residues 91–104 (SKDNNQEPLNYTDT). Residues 91–147 (SKDNNQEPLNYTDTETNEQENSEDFLDPPTPCPDSSMKISHTSPDIPLSTQPGGQEN) form a disordered region. The segment covering 105-116 (ETNEQENSEDFL) has biased composition (acidic residues). Positions 127 to 144 (MKISHTSPDIPLSTQPGG) are enriched in polar residues. Serine 177 carries the post-translational modification Phosphoserine. C2 domains are found at residues 220-341 (ACGK…ILWK) and 352-485 (DLGE…AHWH). Ca(2+) is bound by residues aspartate 251, aspartate 257, aspartate 309, phenylalanine 310, aspartate 311, serine 314, aspartate 317, aspartate 383, aspartate 389, aspartate 443, and aspartate 445.

The protein belongs to the synaptotagmin family. In terms of assembly, homodimer; disulfide-linked via the cysteine motif. Can also form heterodimers with SYT3, SYT6, SYT7 and SYT10. Interacts with DNAJC5 and SNAP25, but not with HSC70. The interaction with DNAJC5 is stimulated tenfold in presence of calcium while the interaction with SNAP25 is inhibited. The cofactor is Ca(2+).

The protein localises to the cytoplasmic vesicle. It localises to the secretory vesicle. The protein resides in the synaptic vesicle membrane. Its function is as follows. May be involved in Ca(2+)-dependent exocytosis of secretory vesicles through Ca(2+) and phospholipid binding to the C2 domain or may serve as Ca(2+) sensors in the process of vesicular trafficking and exocytosis. In Mus musculus (Mouse), this protein is Synaptotagmin-9 (Syt9).